The sequence spans 119 residues: Protein TusC (119 aa).

It belongs to the DsrF/TusC family. As to quaternary structure, heterohexamer, formed by a dimer of trimers. The hexameric TusBCD complex contains 2 copies each of TusB, TusC and TusD. The TusBCD complex interacts with TusE.

It is found in the cytoplasm. Part of a sulfur-relay system required for 2-thiolation of 5-methylaminomethyl-2-thiouridine (mnm(5)s(2)U) at tRNA wobble positions. The protein is Protein TusC of Pectobacterium carotovorum subsp. carotovorum (strain PC1).